The following is a 1033-amino-acid chain: Phospholipid-transporting ATPase neo1 (1033 aa).

The next 4 membrane-spanning stretches (helical) occupy residues 133–153 (LKIG…LITL), 274–294 (TLWA…VYTG), 317–337 (INFY…GLTF), and 344–364 (DWYI…PINL). Residue aspartate 408 is the 4-aspartylphosphate intermediate of the active site. ATP contacts are provided by aspartate 408, lysine 409, threonine 410, glutamate 491, phenylalanine 528, serine 530, lysine 533, lysine 551, arginine 580, threonine 581, threonine 662, glycine 663, aspartate 664, arginine 744, and lysine 750. Mg(2+) is bound at residue aspartate 408. Threonine 410 contributes to the Mg(2+) binding site. The next 6 membrane-spanning stretches (helical) occupy residues 768 to 788 (IGDG…IGIV), 843 to 863 (VVYS…LLLV), 913 to 933 (VLIS…LIGF), 939 to 959 (MLAV…ALQI), 965 to 985 (TIVM…PFLT), and 992 to 1012 (FLLG…SLLP). Aspartate 770 serves as a coordination point for Mg(2+). ATP-binding residues include asparagine 773 and aspartate 774. Aspartate 774 provides a ligand contact to Mg(2+).

Belongs to the cation transport ATPase (P-type) (TC 3.A.3) family. Type IV subfamily. As to quaternary structure, functions without a CDC50/LEM3 family accessory subunit. It depends on Mg(2+) as a cofactor.

The protein resides in the endosome membrane. The protein localises to the golgi apparatus membrane. The catalysed reaction is ATP + H2O + phospholipidSide 1 = ADP + phosphate + phospholipidSide 2.. It carries out the reaction a 1,2-diacyl-sn-glycero-3-phospho-L-serine(out) + ATP + H2O = a 1,2-diacyl-sn-glycero-3-phospho-L-serine(in) + ADP + phosphate + H(+). It catalyses the reaction a 1,2-diacyl-sn-glycero-3-phosphoethanolamine(out) + ATP + H2O = a 1,2-diacyl-sn-glycero-3-phosphoethanolamine(in) + ADP + phosphate + H(+). In terms of biological role, flippase that catalyzes the hydrolysis of ATP coupled to the transport of lysophosphatidylserine, phosphatidylethanolamine, and phosphatidylserine from the lumenal to the cytosolic leaflet of the Golgi apparatus membrane and ensures the maintenance of asymmetric distribution of phospholipids. This chain is Phospholipid-transporting ATPase neo1, found in Schizosaccharomyces pombe (strain 972 / ATCC 24843) (Fission yeast).